The primary structure comprises 189 residues: MyoD family inhibitor domain-containing protein 2 (189 aa).

Positions 28 to 188 (KEDTQLTNAK…LAMEISEICY (161 aa)) constitute an MDFI domain.

The protein belongs to the MDFI family.

The protein is MyoD family inhibitor domain-containing protein 2 of Homo sapiens (Human).